Consider the following 632-residue polypeptide: FAD-binding monooxygenase ausB (632 aa).

The disordered stretch occupies residues 1 to 50 (MASAPEVESVKTPDPASTKTQHTSIAEIHTADQTWNNESNTRLPPNHRHH). 2 stretches are compositionally biased toward polar residues: residues 15–24 (PASTKTQHTS) and 31–43 (ADQT…NTRL). FAD-binding positions include 116-119 (TWYW), 128-129 (DI), and Tyr-134. 126–128 (MCD) contributes to the NADP(+) binding site. Residues 269-275 (TGSTAIQ) and 292-293 (RT) contribute to the NADP(+) site.

This sequence belongs to the FAD-binding monooxygenase family. It depends on FAD as a cofactor.

The enzyme catalyses protoaustinoid A + AH2 + O2 = berkeleyone A + A + H2O. The protein operates within secondary metabolite biosynthesis; terpenoid biosynthesis. Its function is as follows. FAD-binding monooxygenase; part of the gene cluster that mediates the biosynthesis of calidodehydroaustin, a fungal meroterpenoid. The first step of the pathway is the synthesis of 3,5-dimethylorsellinic acid by the polyketide synthase ausA. 3,5-dimethylorsellinic acid is then prenylated by the polyprenyl transferase ausN. Further epoxidation by the FAD-dependent monooxygenase ausM and cyclization by the probable terpene cyclase ausL lead to the formation of protoaustinoid A. Protoaustinoid A is then oxidized to spiro-lactone preaustinoid A3 by the combined action of the FAD-binding monooxygenases ausB and ausC, and the dioxygenase ausE. Acid-catalyzed keto-rearrangement and ring contraction of the tetraketide portion of preaustinoid A3 by ausJ lead to the formation of preaustinoid A4. The aldo-keto reductase ausK, with the help of ausH, is involved in the next step by transforming preaustinoid A4 into isoaustinone which is in turn hydroxylated by the P450 monooxygenase ausI to form austinolide. The cytochrome P450 monooxygenase ausG modifies austinolide to austinol. Austinol is further acetylated to austin by the O-acetyltransferase ausP, which spontaneously changes to dehydroaustin. The cytochrome P450 monooxygenase ausR then converts dehydroaustin is into 7-dehydrodehydroaustin. The hydroxylation catalyzed by ausR permits the O-acetyltransferase ausQ to add an additional acetyl group to the molecule, leading to the formation of acetoxydehydroaustin. The short chain dehydrogenase ausT catalyzes the reduction of the double bond present between carbon atoms 1 and 2 to convert 7-dehydrodehydroaustin into 1,2-dihydro-7-hydroxydehydroaustin. AusQ catalyzes not only an acetylation reaction but also the addition of the PKS ausV diketide product to 1,2-dihydro-7-hydroxydehydroaustin, forming precalidodehydroaustin. Finally, the iron/alpha-ketoglutarate-dependent dioxygenase converts precalidodehydroaustin into calidodehydroaustin. This is FAD-binding monooxygenase ausB from Aspergillus calidoustus.